The sequence spans 201 residues: Small ribosomal subunit protein uS4c (201 aa).

Residues 17 to 36 (ALPGLTRKTPKSGSNLKKKF) are disordered. The S4 RNA-binding domain maps to 89–157 (MRLDNILFRL…VQNYIASSDP (69 aa)).

The protein belongs to the universal ribosomal protein uS4 family. As to quaternary structure, part of the 30S ribosomal subunit. Contacts protein S5. The interaction surface between S4 and S5 is involved in control of translational fidelity.

The protein resides in the plastid. It localises to the chloroplast. In terms of biological role, one of the primary rRNA binding proteins, it binds directly to 16S rRNA where it nucleates assembly of the body of the 30S subunit. Its function is as follows. With S5 and S12 plays an important role in translational accuracy. In Agrostis stolonifera (Creeping bentgrass), this protein is Small ribosomal subunit protein uS4c (rps4).